We begin with the raw amino-acid sequence, 859 residues long: Protein argonaute-2 (859 aa).

The disordered stretch occupies residues 1 to 27 (MYSGAGPALAPPAPPPPIQGYAFKPPP). At Tyr2 the chain carries 3'-nitrotyrosine. The segment covering 9–27 (LAPPAPPPPIQGYAFKPPP) has biased composition (pro residues). Positions 229–348 (PVIEFVCEVL…LPLEVCNIVA (120 aa)) constitute a PAZ domain. Residues 311 to 316 (YFKDRH) form an interaction with guide RNA region. Phosphoserine is present on Ser387. The region spanning 517-818 (LVVVILPGKT…VAFRARYHLV (302 aa)) is the Piwi domain. The interaction with guide RNA stretch occupies residues 524–566 (GKTPVYAEVKRVGDTVLGMATQCVQMKNVQRTTPQTLSNLCLK). Positions 587–590 (FQQP) are interaction with GW182 family members. A divalent metal cation is bound at residue Asp597. The segment at 650-660 (LIQFYKSTRFK) is interaction with GW182 family members. An a divalent metal cation-binding site is contributed by Asp669. Pro700 bears the 4-hydroxyproline mark. 3 interaction with guide RNA regions span residues 709–710 (KR), 753–761 (HAGIQGTSR), and 790–812 (YVRC…VAFR). His807 contributes to the a divalent metal cation binding site. 4 positions are modified to phosphoserine: Ser824, Ser828, Ser831, and Ser834.

The protein belongs to the argonaute family. Ago subfamily. Interacts with DICER1 through its Piwi domain and with TARBP2 during assembly of the RNA-induced silencing complex (RISC). Together, DICER1, AGO2 and TARBP2 constitute the trimeric RISC loading complex (RLC), or micro-RNA (miRNA) loading complex (miRLC). Within the RLC/miRLC, DICER1 and TARBP2 are required to process precursor miRNAs (pre-miRNAs) to mature miRNAs and then load them onto AGO2. AGO2 bound to the mature miRNA constitutes the minimal RISC and may subsequently dissociate from DICER1 and TARBP2. Note however that the term RISC has also been used to describe the trimeric RLC/miRLC. The formation of RISC complexes containing siRNAs rather than miRNAs appears to occur independently of DICER1. Interacts with AGO1. Also interacts with DDB1, DDX5, DDX6, DDX20, DHX30, DHX36, DDX47, DHX9, ELAVL, FXR1, GEMIN4, HNRNPF, IGF2BP1, ILF3, IMP8, MATR3, PABPC1, PRMT5, P4HA1, P4HB, RBM4, SART3, TNRC6A, TNRC6B, UPF1 and YBX1. Interacts with the P-body components DCP1A and XRN1. Associates with polysomes and messenger ribonucleoproteins (mNRPs). Interacts with RBM4; the interaction is modulated under stress-induced conditions, occurs under both cell proliferation and differentiation conditions and in an RNA- and phosphorylation-independent manner. Interacts with LIMD1, WTIP and AJUBA. Interacts with TRIM71; the interaction increases in presence of RNA. Interacts with APOBEC3G in an RNA-dependent manner. Interacts with APOBEC3A, APOBEC3C, APOBEC3F and APOBEC3H. Interacts with DICER1, TARBP2, EIF6, MOV10 and RPL7A (60S ribosome subunit); they form a large RNA-induced silencing complex (RISC). Interacts with FMR1. Interacts with ZFP36. Found in a complex, composed of AGO2, CHD7 and ARB2A. Interacts with RC3H1; the interaction is RNA independent. Interacts with SND1. Interacts with SYT11. Interacts with CLNK. Interacts with GARRE1. Interacts with GRB2; this interaction is important for the formation of a ternary complex containing GRB2, AGO2 and DICER1. In terms of assembly, (Microbial infection) Interacts with Epstein-Barr virus (EBV) tegument protein BGLF2; this interaction participates in the regulation of cellular miRNA by the virus, leading to enhanced SUMOylation. As to quaternary structure, (Microbial infection) Interacts with rotavirus A non-structural protein 5; this interaction probably plays a role in the sequestration of AGO2 in viral factories. (Microbial infection) Interacts with human herpesvirus 8 protein MTA/ORF57; this interaction inhibits P-body formation. The cofactor is Mg(2+). Mn(2+) serves as cofactor. In terms of processing, hydroxylated. 4-hydroxylation appears to enhance protein stability but is not required for miRNA-binding or endonuclease activity. Post-translationally, ubiquitinated on surface-exposed lysines by a SCF-like E3 ubiquitin-protein ligase complex containing ZSWIM8 during target-directed microRNA degradation (TDMD), a process that mediates degradation of microRNAs (miRNAs). Ubiquitination by the SCF-like E3 ubiquitin-protein ligase complex containing ZSWIM8 leads to its subsequent degradation, thereby exposing miRNAs for degradation. ZSWIM8 recognizes and binds AGO2 when it is engaged with a TDMD target. Phosphorylated. A phosphorylation cycle of C-terminal serine cluster (Ser-824-Ser-834) regulates the release of target mRNAs. Target-binding leads to phosphorylation of these residues by CSNK1A1, which reduces the affinity of AGO2 for mRNA and enables target release. The ANKRD52-PPP6C phosphatase complex dephosphorylates the residues, which primes AGO2 for binding a new target. In terms of processing, phosphorylation at Ser-387 by AKT3; leads to up-regulate translational repression of microRNA target and down-regulate endonucleolytic cleavage.

The protein resides in the cytoplasm. It is found in the P-body. Its subcellular location is the nucleus. The catalysed reaction is Endonucleolytic cleavage to 5'-phosphomonoester.. With respect to regulation, inhibited by EDTA. In terms of biological role, required for RNA-mediated gene silencing (RNAi) by the RNA-induced silencing complex (RISC). The 'minimal RISC' appears to include AGO2 bound to a short guide RNA such as a microRNA (miRNA) or short interfering RNA (siRNA). These guide RNAs direct RISC to complementary mRNAs that are targets for RISC-mediated gene silencing. The precise mechanism of gene silencing depends on the degree of complementarity between the miRNA or siRNA and its target. Binding of RISC to a perfectly complementary mRNA generally results in silencing due to endonucleolytic cleavage of the mRNA specifically by AGO2. Binding of RISC to a partially complementary mRNA results in silencing through inhibition of translation, and this is independent of endonuclease activity. May inhibit translation initiation by binding to the 7-methylguanosine cap, thereby preventing the recruitment of the translation initiation factor eIF4-E. May also inhibit translation initiation via interaction with EIF6, which itself binds to the 60S ribosomal subunit and prevents its association with the 40S ribosomal subunit. The inhibition of translational initiation leads to the accumulation of the affected mRNA in cytoplasmic processing bodies (P-bodies), where mRNA degradation may subsequently occur. In some cases RISC-mediated translational repression is also observed for miRNAs that perfectly match the 3' untranslated region (3'-UTR). Can also up-regulate the translation of specific mRNAs under certain growth conditions. Binds to the AU element of the 3'-UTR of the TNF (TNF-alpha) mRNA and up-regulates translation under conditions of serum starvation. Also required for transcriptional gene silencing (TGS), in which short RNAs known as antigene RNAs or agRNAs direct the transcriptional repression of complementary promoter regions. Functionally, (Microbial infection) Upon Sars-CoV-2 infection, associates with viral miRNA-like small RNA, CoV2-miR-O7a, and may repress mRNAs, such as BATF2, to evade the IFN response. In Homo sapiens (Human), this protein is Protein argonaute-2.